Here is a 185-residue protein sequence, read N- to C-terminus: Peptidoglycan-recognition protein SC1a/b (185 aa).

An N-terminal signal peptide occupies residues 1–21 (MVSKVALLLAVLVCSQYMAQG). The N-acetylmuramoyl-L-alanine amidase domain maps to 46-170 (SYAIIHHTAG…RQVSATECPG (125 aa)). Histidine 51 is a Zn(2+) binding site. A disulfide bridge connects residues cysteine 58 and cysteine 64. Zn(2+) is bound by residues histidine 160 and cysteine 168.

This sequence belongs to the N-acetylmuramoyl-L-alanine amidase 2 family. Zn(2+) is required as a cofactor.

It localises to the secreted. The catalysed reaction is Hydrolyzes the link between N-acetylmuramoyl residues and L-amino acid residues in certain cell-wall glycopeptides.. Its function is as follows. N-acetylmuramyl-L-alanine amidase involved in innate immunity by degrading bacterial peptidoglycans (PGN). Plays a scavenger role by digesting biologically active PGN into biologically inactive fragments. Has no direct bacteriolytic activity. This is Peptidoglycan-recognition protein SC1a/b (PGRP-SC1a) from Drosophila simulans (Fruit fly).